Here is a 547-residue protein sequence, read N- to C-terminus: Chaperonin GroEL (547 aa).

ATP-binding positions include 29-32 (TLGP), Lys-50, 86-90 (DGTTT), Gly-414, and Asp-495. Residues 525 to 547 (PSDKEDSIPPMRGGMGGMGGMDF) form a disordered region. Over residues 537–547 (GGMGGMGGMDF) the composition is skewed to gly residues.

This sequence belongs to the chaperonin (HSP60) family. Forms a cylinder of 14 subunits composed of two heptameric rings stacked back-to-back. Interacts with the co-chaperonin GroES.

Its subcellular location is the cytoplasm. It carries out the reaction ATP + H2O + a folded polypeptide = ADP + phosphate + an unfolded polypeptide.. Functionally, together with its co-chaperonin GroES, plays an essential role in assisting protein folding. The GroEL-GroES system forms a nano-cage that allows encapsulation of the non-native substrate proteins and provides a physical environment optimized to promote and accelerate protein folding. In Rickettsia felis (strain ATCC VR-1525 / URRWXCal2) (Rickettsia azadi), this protein is Chaperonin GroEL.